We begin with the raw amino-acid sequence, 1062 residues long: Protein P1-P2 (1062 aa).

A signal peptide spans 1–20 (MNRFTAYAALFFMFSLCSTA). 3 helical membrane passes run 121 to 141 (AASV…WTLA), 144 to 164 (ITLF…LGCI), and 172 to 192 (ALSL…KIIW). Residues 207-399 (VEGYKGFSVP…GITSPNYVFE (193 aa)) enclose the Peptidase S39 domain. Catalysis depends on for protease activity residues His255, Asp286, and Ser354. A disordered region spans residues 455–560 (ATNAPAEKTA…QTKEARKAWR (106 aa)). Residues 463-484 (TAQTNSAEKTAPSTSAEKTALT) show a composition bias toward polar residues. The segment covering 497–511 (QNKRQLRHPRRRYKR) has biased composition (basic residues). Residues 551-560 (QTKEARKAWR) show a composition bias toward basic and acidic residues. Residues 859 to 974 (EYTRPTDCSG…APNSDLEEYK (116 aa)) form the RdRp catalytic domain.

Specific enzymatic cleavages in vivo yield mature proteins. The protease probably cleaves itself and releases the RdRp (Potential). Cleavages have been shown in the P1 protein, but since the N-terminus containing the serine protease is shared between P1 and P1-P2, cleavages should also occur within the P1-P2 protein.

Its subcellular location is the membrane. The enzyme catalyses RNA(n) + a ribonucleoside 5'-triphosphate = RNA(n+1) + diphosphate. In terms of biological role, precursor from which the RNA-dependent RNA polymerase (RdRp) is probably released. RNA-dependent RNA polymerase plays an essential role in virus replication (Potential). This is Protein P1-P2 from Potato leafroll virus (strain Potato/Scotland/strain 1/1984) (PLrV).